The sequence spans 425 residues: Phosphomethylpyrimidine synthase (425 aa).

Substrate-binding positions include Met-94, Tyr-123, His-162, 184–186, 225–228, and Glu-264; these read SRG and NGMR. Residue His-268 participates in Zn(2+) binding. Tyr-291 contributes to the substrate binding site. Zn(2+) is bound at residue His-332. Cys-407, Cys-410, and Cys-414 together coordinate [4Fe-4S] cluster.

It belongs to the ThiC family. [4Fe-4S] cluster serves as cofactor.

It catalyses the reaction 5-amino-1-(5-phospho-beta-D-ribosyl)imidazole + S-adenosyl-L-methionine = 4-amino-2-methyl-5-(phosphooxymethyl)pyrimidine + CO + 5'-deoxyadenosine + formate + L-methionine + 3 H(+). It participates in cofactor biosynthesis; thiamine diphosphate biosynthesis. Its function is as follows. Catalyzes the synthesis of the hydroxymethylpyrimidine phosphate (HMP-P) moiety of thiamine from aminoimidazole ribotide (AIR) in a radical S-adenosyl-L-methionine (SAM)-dependent reaction. The chain is Phosphomethylpyrimidine synthase from Methanocorpusculum labreanum (strain ATCC 43576 / DSM 4855 / Z).